We begin with the raw amino-acid sequence, 485 residues long: Dipeptide and tripeptide permease C (485 aa).

Residues 1–12 (MKTPSQPRAIYY) lie on the Cytoplasmic side of the membrane. The chain crosses the membrane as a helical span at residues 13–33 (IVAIQIWEYFSFYGMRALLIL). Residues 34-46 (YLTHQLGFDDNHA) are Periplasmic-facing. A helical membrane pass occupies residues 47 to 67 (ISLFSAYASLVYVTPILGGWL). Residues 68 to 70 (ADR) lie on the Cytoplasmic side of the membrane. The helical transmembrane segment at 71–93 (LLGNRTAVIAGALLMTLGHVVLG) threads the bilayer. The Periplasmic segment spans residues 94–102 (IDTNSTFSL). Residues 103–125 (YLALAIIICGYGLFKSNISCLLG) form a helical membrane-spanning segment. Residues 126–140 (ELYDENDHRRDGGFS) lie on the Cytoplasmic side of the membrane. Residues 141–161 (LLYAAGNIGSIAAPIACGLAA) traverse the membrane as a helical segment. Over 162-164 (QWY) the chain is Periplasmic. A helical membrane pass occupies residues 165-185 (GWHVGFALAGGGMFIGLLIFL). Over 186 to 208 (SGHRHFQSTRSMDKKALTSVKFA) the chain is Cytoplasmic. Residues 209–229 (LPVWSWLVVMLCLAPVFFTLL) form a helical membrane-spanning segment. The Periplasmic portion of the chain corresponds to 230-234 (LENDW). The helical transmembrane segment at 235–255 (SGYLLAIVCLIAAQIIARMMI) threads the bilayer. At 256-262 (KFPEHRR) the chain is on the cytoplasmic side. The chain crosses the membrane as a helical span at residues 263–283 (ALWQIVLLMFVGTLFWVLAQQ). Over 284–307 (GGSTISLFIDRFVNRQAFNIEVPT) the chain is Periplasmic. The helical transmembrane segment at 308–328 (ALFQSVNAIAVMLAGVVLAWL) threads the bilayer. Residues 329 to 340 (ASPESRGNSTLR) lie on the Cytoplasmic side of the membrane. Residues 341-361 (VWLKFAFGLLLMACGFMLLAF) form a helical membrane-spanning segment. At 362–375 (DARHAAADGQASMG) the chain is on the periplasmic side. Residues 376–396 (VMISGLALMGFAELFIDPVAI) form a helical membrane-spanning segment. At 397–406 (AQITRLKMSG) the chain is on the cytoplasmic side. The helical transmembrane segment at 407 to 427 (VLTGIYMLATGAVANWLAGVV) threads the bilayer. Over 428 to 446 (AQQTTESQISGMAIAAYQR) the chain is Periplasmic. Residues 447–467 (FFSQMGEWTLACVAIIVVLAF) form a helical membrane-spanning segment. The Cytoplasmic segment spans residues 468–485 (ATRFLFSTPTNMIQESND).

It belongs to the major facilitator superfamily. Proton-dependent oligopeptide transporter (POT/PTR) (TC 2.A.17) family. Monomer.

It is found in the cell inner membrane. Functionally, proton-dependent permease that transports di- and tripeptides. Shows significantly higher specificity towards dipeptides than tripeptides. Has a preference for dipeptides with a C-terminal Lys residue. Can bind Ala-Lys, Lys-Ala, Ala-Ala. Can also transport alanine and trialanine. The chain is Dipeptide and tripeptide permease C from Escherichia coli (strain K12).